A 75-amino-acid chain; its full sequence is Mitochondrial import receptor subunit TOM7-1 (75 aa).

N-acetylmethionine is present on Met1. A disordered region spans residues 1-28; that stretch reads MESTISLKVNKGKGKGSKGASSSDDKSK. At 1–46 the chain is on the cytoplasmic side; that stretch reads MESTISLKVNKGKGKGSKGASSSDDKSKFDVVKEWTNWSLKKAKVV. A helical transmembrane segment spans residues 47-64; it reads THYGFIPLVIFVGMNSDP. Residues 65 to 75 lie on the Mitochondrial intermembrane side of the membrane; it reads KPHLFQLLSPV.

The protein belongs to the Tom7 family. As to quaternary structure, forms part of the preprotein translocase complex of the outer mitochondrial membrane (TOM complex) which consists of at least 6 different proteins (TOM5, TOM6, TOM7, TOM20, TOM22/TOM9 and TOM40). Expressed in roots, flowers, young cotyledons and leaves.

The protein resides in the mitochondrion outer membrane. Seems to act as a modulator of the dynamics of the mitochondrial protein transport machinery. Seems to promote the dissociation of subunits of the outer membrane translocase. The chain is Mitochondrial import receptor subunit TOM7-1 (TOM7-1) from Arabidopsis thaliana (Mouse-ear cress).